Consider the following 643-residue polypeptide: Threonine--tRNA ligase (643 aa).

Residues methionine 1–threonine 61 form the TGS domain. A catalytic region spans residues aspartate 240 to proline 540. Zn(2+) contacts are provided by cysteine 335, histidine 386, and histidine 517.

It belongs to the class-II aminoacyl-tRNA synthetase family. In terms of assembly, homodimer. It depends on Zn(2+) as a cofactor.

The protein resides in the cytoplasm. The catalysed reaction is tRNA(Thr) + L-threonine + ATP = L-threonyl-tRNA(Thr) + AMP + diphosphate + H(+). Its function is as follows. Catalyzes the attachment of threonine to tRNA(Thr) in a two-step reaction: L-threonine is first activated by ATP to form Thr-AMP and then transferred to the acceptor end of tRNA(Thr). Also edits incorrectly charged L-seryl-tRNA(Thr). This is Threonine--tRNA ligase from Clostridium perfringens (strain SM101 / Type A).